The sequence spans 79 residues: U-actitoxin-Bgr3d (79 aa).

The first 21 residues, 1–21 (MSYERLLCLVLVASFIAASVA), serve as a signal peptide directing secretion. Residues 22–38 (QHPGDAPRMEDDSSAIQ) constitute a propeptide that is removed on maturation. 3 cysteine pairs are disulfide-bonded: Cys44/Cys76, Cys46/Cys69, and Cys59/Cys77.

The protein belongs to the sea anemone type 3 (BDS) potassium channel toxin family.

It localises to the secreted. The protein resides in the nematocyst. Its function is as follows. Potently and selectively inhibits voltage-gated potassium channels Kv11/KCNH/ERG. Acts as a gating-modifier toxin that shifts the voltage-dependence of ERG activation in the positive direction and suppresses its current amplitudes elicited by strong depolarizing pulses that maximally activate the channels. In Bunodosoma granuliferum (Red warty sea anemone), this protein is U-actitoxin-Bgr3d.